Here is a 560-residue protein sequence, read N- to C-terminus: Nibrin homolog (560 aa).

One can recognise an FHA domain in the interval 25 to 87 (YKVGRKDCDV…YGTFFNKVQG (63 aa)). One can recognise a BRCT domain in the interval 115-190 (TFRLSFVPIV…KQIVLGDWFK (76 aa)). The Nuclear localization signal signature appears at 511-518 (YKRGTVID).

It belongs to the Nibrin family. Component of the MRN complex composed of two heterodimers RAD50 and MRE11 associated with a single NBS1.

The protein localises to the nucleus. Its subcellular location is the chromosome. In terms of biological role, component of the MRN complex, which plays a central role in double-strand break (DSB) repair, DNA recombination, maintenance of telomere integrity and meiosis. The MRN complex is involved in the repair of DNA double-strand breaks (DSBs) via homologous recombination (HR), an error-free mechanism which primarily occurs during S and G2 phases. The complex (1) mediates the end resection of damaged DNA, which generates proper single-stranded DNA, a key initial steps in HR, and is (2) required for the recruitment of other repair factors and efficient activation of ATM and ATR upon DNA damage. The MRN complex possesses single-strand endonuclease activity and double-strand-specific 3'-5' exonuclease activity, which are provided by MRE11, to initiate end resection, which is required for single-strand invasion and recombination. Within the MRN complex, NBS1 acts as a protein-protein adapter, which specifically recognizes and binds phosphorylated proteins, promoting their recruitment to DNA damage sites. Recruits MRE11 and RAD50 components of the MRN complex to DSBs in response to DNA damage. The polypeptide is Nibrin homolog (Oryza sativa subsp. indica (Rice)).